A 152-amino-acid chain; its full sequence is Large ribosomal subunit protein bL9 (152 aa).

Belongs to the bacterial ribosomal protein bL9 family.

In terms of biological role, binds to the 23S rRNA. The protein is Large ribosomal subunit protein bL9 of Mycobacterium sp. (strain JLS).